The sequence spans 453 residues: Ribulose bisphosphate carboxylase large chain (453 aa).

A propeptide spanning residues 1-2 (MS) is cleaved from the precursor. The residue at position 3 (Pro3) is an N-acetylproline. Position 14 is an N6,N6,N6-trimethyllysine (Lys14). Residues Asn123 and Thr173 each contribute to the substrate site. The active-site Proton acceptor is Lys175. Lys177 serves as a coordination point for substrate. Residues Lys201, Asp203, and Glu204 each coordinate Mg(2+). At Lys201 the chain carries N6-carboxylysine. His294 (proton acceptor) is an active-site residue. Arg295, His327, and Ser379 together coordinate substrate.

Belongs to the RuBisCO large chain family. Type I subfamily. Heterohexadecamer of 8 large chains and 8 small chains; disulfide-linked. The disulfide link is formed within the large subunit homodimers. It depends on Mg(2+) as a cofactor. The disulfide bond which can form in the large chain dimeric partners within the hexadecamer appears to be associated with oxidative stress and protein turnover.

Its subcellular location is the plastid. It localises to the chloroplast. It catalyses the reaction 2 (2R)-3-phosphoglycerate + 2 H(+) = D-ribulose 1,5-bisphosphate + CO2 + H2O. The catalysed reaction is D-ribulose 1,5-bisphosphate + O2 = 2-phosphoglycolate + (2R)-3-phosphoglycerate + 2 H(+). In terms of biological role, ruBisCO catalyzes two reactions: the carboxylation of D-ribulose 1,5-bisphosphate, the primary event in carbon dioxide fixation, as well as the oxidative fragmentation of the pentose substrate in the photorespiration process. Both reactions occur simultaneously and in competition at the same active site. The protein is Ribulose bisphosphate carboxylase large chain of Asperula laevigata (Smooth woodruff).